The primary structure comprises 887 residues: Tubulin polyglutamylase TTLL7 (887 aa).

The interval 1 to 21 (MPSLPQEGVIQGPSPLDLNTE) is disordered. Positions 38-390 (KGTITANVAG…RTSDKRRNLA (353 aa)) constitute a TTL domain. Residues Lys-160, 166–167 (MG), 188–191 (QEYI), and 201–203 (KFD) contribute to the ATP site. Arg-227 serves as a coordination point for L-glutamate. 249 to 250 (TN) serves as a coordination point for ATP. 3 residues coordinate L-glutamate: Tyr-251, Ser-252, and Lys-271. Positions 336, 349, and 351 each coordinate Mg(2+). Residue Lys-367 coordinates L-glutamate. The interval 388-450 (NLAKQKAEAQ…ISREEHENRH (63 aa)) is c-MTBD region. Disordered regions lie at residues 519 to 621 (MGKT…TRPF) and 651 to 676 (LPHS…TKEQ). Low complexity predominate over residues 548–560 (SSDSSYDSSSSSS). Composition is skewed to polar residues over residues 593–621 (QQPS…TRPF) and 656–670 (DACS…SLRQ).

This sequence belongs to the tubulin--tyrosine ligase family. In terms of assembly, interacts with both alpha- and beta-tubulin (via C-terminal tubulin tails). Requires Mg(2+) as cofactor. As to expression, highly expressed in the nervous system including spinal cord, thalamus, hippocampus, hypothalamus and cerebellum.

It is found in the cell projection. The protein resides in the cilium. The protein localises to the cytoplasm. It localises to the cytoskeleton. Its subcellular location is the cilium basal body. It is found in the dendrite. The protein resides in the perikaryon. It catalyses the reaction L-glutamyl-[protein] + L-glutamate + ATP = gamma-L-glutamyl-L-glutamyl-[protein] + ADP + phosphate + H(+). It carries out the reaction (L-glutamyl)(n)-gamma-L-glutamyl-L-glutamyl-[protein] + L-glutamate + ATP = (L-glutamyl)(n+1)-gamma-L-glutamyl-L-glutamyl-[protein] + ADP + phosphate + H(+). Functionally, polyglutamylase which modifies tubulin, generating polyglutamate side chains of variable lengths on the gamma-carboxyl group of specific glutamate residues within the C-terminal tail of tubulin. Mediates both ATP-dependent initiation and elongation steps of the polyglutamylation reaction. Preferentially modifies the beta-tubulin tail over an alpha-tail. Competes with monoglycylase TTLL3 for modification site on beta-tubulin substrate, thereby creating an anticorrelation between glycylation and glutamylation reactions. Required for neurite growth; responsible for the strong increase in tubulin polyglutamylation during postnatal neuronal maturation. The protein is Tubulin polyglutamylase TTLL7 of Homo sapiens (Human).